A 128-amino-acid polypeptide reads, in one-letter code: Large ribosomal subunit protein bL17 (128 aa).

This sequence belongs to the bacterial ribosomal protein bL17 family. As to quaternary structure, part of the 50S ribosomal subunit. Contacts protein L32.

This Streptococcus sanguinis (strain SK36) protein is Large ribosomal subunit protein bL17.